A 499-amino-acid chain; its full sequence is MTDRPIMTTSAGAPIPDNQNSLTAGERGPILMQDYQLIEKLSHQNRERIPERAVHAKGWGAYGTLTITGDISRYTKAKVLQPGAQTPMLARFSTVAGELGAADAERDVRGFALKFYTQEGNWDLVGNNTPVFFVRDPLKFPDFIHTQKRHPRTHLRSATAMWDFWSLSPESLHQVTILMSDRGLPTDVRHINGYGSHTYSFWNDAGERYWVKFHFKTMQGHKHWTNAEAEQVIGRTRESTQEDLFSAIENGEFPKWKVQVQIMPELDADKTPYNPFDLTKVWPHADYPPIDIGVMELNRNPENYFTEVENAAFSPSNIVPGIGFSPDKMLQARIFSYADAHRHRLGTHYESIPVNQPKCPVHHYHRDGQMNVYGGIKTGNPDAYYEPNSFNGPVEQPSAKEPPLCISGNADRYNHRIGNDDYSQPRALFNLFDAAQKQRLFSNIAAAMKGVPGFIVERQLGHFKLIHPEYEAGVRKALKDAHGYDANTIALNEKITAAE.

A disordered region spans residues 1-25 (MTDRPIMTTSAGAPIPDNQNSLTAG). Positions 7–23 (MTTSAGAPIPDNQNSLT) are enriched in polar residues. Residues His-55 and Asn-127 contribute to the active site. Tyr-337 is a heme binding site.

It belongs to the catalase family. As to quaternary structure, homotetramer. Heme serves as cofactor.

It localises to the periplasm. The enzyme catalyses 2 H2O2 = O2 + 2 H2O. In terms of biological role, decomposes hydrogen peroxide into water and oxygen; serves to protect cells from the toxic effects of hydrogen peroxide. This chain is Catalase (katA), found in Brucella abortus biovar 1 (strain 9-941).